The primary structure comprises 208 residues: Uracil phosphoribosyltransferase (208 aa).

5-phospho-alpha-D-ribose 1-diphosphate is bound by residues arginine 78, arginine 103, and 130 to 138 (DPMLATGVS). Residues isoleucine 193 and 198 to 200 (GDA) contribute to the uracil site. Aspartate 199 is a 5-phospho-alpha-D-ribose 1-diphosphate binding site.

It belongs to the UPRTase family. The cofactor is Mg(2+).

The enzyme catalyses UMP + diphosphate = 5-phospho-alpha-D-ribose 1-diphosphate + uracil. The protein operates within pyrimidine metabolism; UMP biosynthesis via salvage pathway; UMP from uracil: step 1/1. With respect to regulation, allosterically activated by GTP. Catalyzes the conversion of uracil and 5-phospho-alpha-D-ribose 1-diphosphate (PRPP) to UMP and diphosphate. This is Uracil phosphoribosyltransferase from Thermosipho melanesiensis (strain DSM 12029 / CIP 104789 / BI429).